We begin with the raw amino-acid sequence, 176 residues long: Ribosome maturation factor RimM (176 aa).

Positions 100–173 (PGEFHLLDLL…WLMVCPPPGL (74 aa)) constitute a PRC barrel domain.

The protein belongs to the RimM family. As to quaternary structure, binds ribosomal protein uS19.

It is found in the cytoplasm. In terms of biological role, an accessory protein needed during the final step in the assembly of 30S ribosomal subunit, possibly for assembly of the head region. Essential for efficient processing of 16S rRNA. May be needed both before and after RbfA during the maturation of 16S rRNA. It has affinity for free ribosomal 30S subunits but not for 70S ribosomes. This Prochlorococcus marinus (strain SARG / CCMP1375 / SS120) protein is Ribosome maturation factor RimM.